Consider the following 183-residue polypeptide: NEDD8-conjugating enzyme Ubc12 (183 aa).

Met1 is modified (N-acetylmethionine). The tract at residues 1–28 is disordered; sequence MIKLFSLKQQKKEEESAGGTKGSSKKAS. The UBC core domain maps to 29–173; that stretch reads AAQLRIQKDI…VQRSMRGGYI (145 aa). Cys111 functions as the Glycyl thioester intermediate in the catalytic mechanism.

It belongs to the ubiquitin-conjugating enzyme family. UBC12 subfamily. In terms of processing, the acetylation of Met-1 increases affinity for DCUN1D1 by about 2 orders of magnitude and is crucial for NEDD8 transfer to cullins.

It catalyses the reaction [E1 NEDD8-activating enzyme]-S-[NEDD8 protein]-yl-L-cysteine + [E2 NEDD8-conjugating enzyme]-L-cysteine = [E1 NEDD8-activating enzyme]-L-cysteine + [E2 NEDD8-conjugating enzyme]-S-[NEDD8-protein]-yl-L-cysteine.. Its pathway is protein modification; protein neddylation. In terms of biological role, accepts the ubiquitin-like protein NEDD8 from the UBA3-NAE1 E1 complex and catalyzes its covalent attachment to other proteins. The specific interaction with the E3 ubiquitin ligase rbx1, but not rbx2, suggests that the rbx1-ube2m complex neddylates specific target proteins, such as cul1, cul2, cul3 and cul4. Involved in cell proliferation. This is NEDD8-conjugating enzyme Ubc12 (ube2m) from Xenopus tropicalis (Western clawed frog).